A 157-amino-acid chain; its full sequence is N-acetylgalactosamine-specific phosphotransferase enzyme IIB component 2 (157 aa).

A PTS EIIB type-4 domain is found at 1-157; the sequence is MPNIVLSRID…EPAVDLFKLL (157 aa). The active-site Pros-phosphohistidine intermediate is His-15.

It localises to the cytoplasm. In terms of biological role, the phosphoenolpyruvate-dependent sugar phosphotransferase system (sugar PTS), a major carbohydrate active -transport system, catalyzes the phosphorylation of incoming sugar substrates concomitantly with their translocation across the cell membrane. This system is involved in N-acetylgalactosamine transport. The protein is N-acetylgalactosamine-specific phosphotransferase enzyme IIB component 2 (agaV) of Escherichia coli (strain K12).